A 364-amino-acid polypeptide reads, in one-letter code: Palmitoyltransferase ZDHHC9 (364 aa).

The Cytoplasmic portion of the chain corresponds to 1–35 (MSVMVVRKKVTRKWEKLPGRNTFCCDGRVMMARQK). Residues 36–56 (GIFYLTLFLILGTCTLFFAFE) traverse the membrane as a helical segment. The Lumenal portion of the chain corresponds to 57 to 63 (CRYLAVQ). A helical transmembrane segment spans residues 64–84 (QSPAIPVFAAMLFLFSMATLL). Over 85–183 (RASFSDPGVI…NCVGKRNYRY (99 aa)) the chain is Cytoplasmic. The 51-residue stretch at 139-189 (KYCYTCKIFRPPRASHCSICDNCVERFDHHCPWVGNCVGKRNYRYFYLFIL) folds into the DHHC domain. Catalysis depends on cysteine 169, which acts as the S-palmitoyl cysteine intermediate. A helical transmembrane segment spans residues 184–204 (FYLFILSLSLLTIYVFAFNIV). Topologically, residues 205–228 (YVALKSLKIGFLETLKETPGTVLE) are lumenal. A helical membrane pass occupies residues 229–249 (VLICFFTLWSVVGLTGFHTFL). Residues 250–364 (VALNQTTNED…PPQEAAEAEK (115 aa)) lie on the Cytoplasmic side of the membrane. The segment at 303–364 (PLEESGSRPP…PPQEAAEAEK (62 aa)) is disordered. Positions 310 to 323 (RPPSTQETSSSLLP) are enriched in polar residues. Residues 346–356 (EMPPPEPPEPP) show a composition bias toward pro residues.

It belongs to the DHHC palmitoyltransferase family. ERF2/ZDHHC9 subfamily. As to quaternary structure, interacts with GOLGA7.

The protein resides in the endoplasmic reticulum membrane. It localises to the golgi apparatus membrane. The enzyme catalyses L-cysteinyl-[protein] + hexadecanoyl-CoA = S-hexadecanoyl-L-cysteinyl-[protein] + CoA. Palmitoyltransferase that catalyzes the addition of palmitate onto various protein substrates, such as ADRB2, GSDMD, HRAS, NRAS and CGAS. The ZDHHC9-GOLGA7 complex is a palmitoyltransferase specific for HRAS and NRAS. May have a palmitoyltransferase activity toward the beta-2 adrenergic receptor/ADRB2 and therefore regulate G protein-coupled receptor signaling. Acts as a regulator of innate immunity by catalyzing palmitoylation of CGAS, thereby promoting CGAS homodimerization and cyclic GMP-AMP synthase activity. Activates pyroptosis by catalyzing palmitoylation of gasdermin-D (GSDMD), thereby promoting membrane translocation and pore formation of GSDMD. The chain is Palmitoyltransferase ZDHHC9 (ZDHHC9) from Pongo abelii (Sumatran orangutan).